The following is a 700-amino-acid chain: DNA topoisomerase 1 (700 aa).

One can recognise a Toprim domain in the interval 3–114 (KNLIIVESPA…TLPRIVFHEI (112 aa)). Residues Glu-9 and Asp-83 each contribute to the Mg(2+) site. The Topo IA-type catalytic domain maps to 130–553 (NMHSVNAQQT…EFYYPFMRKI (424 aa)). Residues 164–169 (SAGRVQ) form an interaction with DNA region. Catalysis depends on Tyr-298, which acts as the O-(5'-phospho-DNA)-tyrosine intermediate. 3 consecutive C4-type zinc fingers follow at residues 573–599 (CPDC…FPKC), 629–656 (CPSC…YPKC), and 669–692 (CEEC…CLKC).

Belongs to the type IA topoisomerase family. As to quaternary structure, monomer. Mg(2+) is required as a cofactor.

It carries out the reaction ATP-independent breakage of single-stranded DNA, followed by passage and rejoining.. Its function is as follows. Releases the supercoiling and torsional tension of DNA, which is introduced during the DNA replication and transcription, by transiently cleaving and rejoining one strand of the DNA duplex. Introduces a single-strand break via transesterification at a target site in duplex DNA. The scissile phosphodiester is attacked by the catalytic tyrosine of the enzyme, resulting in the formation of a DNA-(5'-phosphotyrosyl)-enzyme intermediate and the expulsion of a 3'-OH DNA strand. The free DNA strand then undergoes passage around the unbroken strand, thus removing DNA supercoils. Finally, in the religation step, the DNA 3'-OH attacks the covalent intermediate to expel the active-site tyrosine and restore the DNA phosphodiester backbone. This is DNA topoisomerase 1 from Campylobacter jejuni subsp. jejuni serotype O:2 (strain ATCC 700819 / NCTC 11168).